The chain runs to 194 residues: GTP cyclohydrolase-2 (194 aa).

GTP is bound at residue 50-54; the sequence is RIHSE. Residues C55, C66, and C68 each contribute to the Zn(2+) site. GTP is bound by residues 94–96 and T116; that span reads EGR. Catalysis depends on D128, which acts as the Proton acceptor. The active-site Nucleophile is R130. GTP-binding residues include T151 and K156.

It belongs to the GTP cyclohydrolase II family. Requires Zn(2+) as cofactor.

It carries out the reaction GTP + 4 H2O = 2,5-diamino-6-hydroxy-4-(5-phosphoribosylamino)-pyrimidine + formate + 2 phosphate + 3 H(+). The protein operates within cofactor biosynthesis; riboflavin biosynthesis; 5-amino-6-(D-ribitylamino)uracil from GTP: step 1/4. Its function is as follows. Catalyzes the conversion of GTP to 2,5-diamino-6-ribosylamino-4(3H)-pyrimidinone 5'-phosphate (DARP), formate and pyrophosphate. The sequence is that of GTP cyclohydrolase-2 from Helicobacter hepaticus (strain ATCC 51449 / 3B1).